The chain runs to 205 residues: Ras-related and estrogen-regulated growth inhibitor-like protein (205 aa).

The small GTPase-like stretch occupies residues 1-205 (MSNFLHLKYN…NVFGKRRKSV (205 aa)). Residues 11–18 (EKSVSVTK), 58–64 (DPCSQTQ), and 123–126 (NKRD) contribute to the GTP site.

The protein belongs to the small GTPase superfamily. Ras family.

The catalysed reaction is GTP + H2O = GDP + phosphate + H(+). Binds GDP/GTP and may possess intrinsic GTPase activity. The sequence is that of Ras-related and estrogen-regulated growth inhibitor-like protein (RERGL) from Homo sapiens (Human).